We begin with the raw amino-acid sequence, 304 residues long: Murein tetrapeptide carboxypeptidase (304 aa).

S106 serves as the catalytic Nucleophile. Residues E200 and H270 each act as charge relay system in the active site.

Belongs to the peptidase S66 family.

It is found in the cytoplasm. It carries out the reaction N-acetyl-D-glucosaminyl-N-acetylmuramoyl-L-alanyl-meso-2,6-diaminoheptanedioyl-D-alanine + H2O = N-acetyl-D-glucosaminyl-N-acetylmuramoyl-L-alanyl-meso-2,6-diaminoheptanedioate + D-alanine. Its pathway is cell wall biogenesis; peptidoglycan recycling. Functionally, releases the terminal D-alanine residue from the cytoplasmic tetrapeptide recycling product L-Ala-gamma-D-Glu-meso-Dap-D-Ala. Can also cleave D-Ala from murein derivatives containing the tetrapeptide, i.e. MurNAc-tetrapeptide, UDP-MurNAc-tetrapeptide, GlcNAc-MurNAc-tetrapeptide, and GlcNAc-anhMurNAc-tetrapeptide. Does not act on murein sacculi or cross-linked muropeptides. The tripeptides produced by the LcdA reaction can then be reused as peptidoglycan building blocks; LcdA is thereby involved in murein recycling. This chain is Murein tetrapeptide carboxypeptidase (ldcA), found in Escherichia coli O157:H7.